Here is a 349-residue protein sequence, read N- to C-terminus: Heparin sulfate O-sulfotransferase (349 aa).

The Cytoplasmic portion of the chain corresponds to 1–17 (MFRKLLKMWILLRPTHW). The helical; Signal-anchor for type II membrane protein transmembrane segment at 18–38 (LILIALCAVTCAGYWLLWSEI) threads the bilayer. At 39–349 (RLEHAFKPLS…KFMYEKIRPK (311 aa)) the chain is on the lumenal side. Residues N107 and N126 are each glycosylated (N-linked (GlcNAc...) asparagine). Residues H139 and H141 contribute to the active site. 2 disulfides stabilise this stretch: C200/C208 and C221/C227. The N-linked (GlcNAc...) asparagine glycan is linked to N282.

It belongs to the sulfotransferase 3 family. Homotrimer.

It is found in the golgi apparatus membrane. In terms of biological role, catalyzes the transfer of sulfate to the C2-position of selected hexuronic acid residues within the maturing heparan sulfate (HS). In Drosophila melanogaster (Fruit fly), this protein is Heparin sulfate O-sulfotransferase.